The chain runs to 143 residues: Chorion class A protein Ld5 (143 aa).

The signal sequence occupies residues 1 to 21; that stretch reads MNSFALLLVCIQACLVQSVFS.

Belongs to the chorion protein family.

This protein is one of many from the eggshell of the gypsy moth. The sequence is that of Chorion class A protein Ld5 from Lymantria dispar (Gypsy moth).